We begin with the raw amino-acid sequence, 757 residues long: Catalase-peroxidase 2 (757 aa).

Positions 1 to 26 (MKHPLFNQKVLAGFVSMLLISGSAFA) are cleaved as a signal peptide. The tryptophyl-tyrosyl-methioninium (Trp-Tyr) (with M-274) cross-link spans 126–248 (WHSAGTYRTL…LGATHMGLIY (123 aa)). His-127 serves as the catalytic Proton acceptor. The tryptophyl-tyrosyl-methioninium (Tyr-Met) (with W-126) cross-link spans 248–274 (YVNPEGPKGVPDPLGSAKNIRVAFERM). His-289 lines the heme b pocket.

It belongs to the peroxidase family. Peroxidase/catalase subfamily. As to quaternary structure, homodimer or homotetramer. Heme b serves as cofactor. In terms of processing, formation of the three residue Trp-Tyr-Met cross-link is important for the catalase, but not the peroxidase activity of the enzyme.

The enzyme catalyses H2O2 + AH2 = A + 2 H2O. It catalyses the reaction 2 H2O2 = O2 + 2 H2O. Bifunctional enzyme with both catalase and broad-spectrum peroxidase activity. The polypeptide is Catalase-peroxidase 2 (Shewanella frigidimarina (strain NCIMB 400)).